Reading from the N-terminus, the 529-residue chain is Peptide chain release factor 3 (529 aa).

The 270-residue stretch at A11–M280 folds into the tr-type G domain. Residues S20 to T27, D88 to H92, and N142 to D145 each bind GTP.

Belongs to the TRAFAC class translation factor GTPase superfamily. Classic translation factor GTPase family. PrfC subfamily.

It localises to the cytoplasm. Its function is as follows. Increases the formation of ribosomal termination complexes and stimulates activities of RF-1 and RF-2. It binds guanine nucleotides and has strong preference for UGA stop codons. It may interact directly with the ribosome. The stimulation of RF-1 and RF-2 is significantly reduced by GTP and GDP, but not by GMP. The chain is Peptide chain release factor 3 from Photorhabdus laumondii subsp. laumondii (strain DSM 15139 / CIP 105565 / TT01) (Photorhabdus luminescens subsp. laumondii).